The following is a 343-amino-acid chain: Cyclin-Y-like protein 1 (343 aa).

Positions 1 to 48 (MGNTVTCCVSPDASPKAGRDRAVTERGEPYQAQVELQETDPGPHLQHI) are disordered. The segment covering 17–28 (AGRDRAVTERGE) has biased composition (basic and acidic residues). In terms of domain architecture, Cyclin N-terminal spans 145–267 (EIFDEKLHPL…FLELLQFNIN (123 aa)).

It belongs to the cyclin family. Cyclin Y subfamily.

It localises to the cell membrane. Its function is as follows. Key regulator of Wnt signaling implicated in various biological processes, such as embryonic neurogenesis. This chain is Cyclin-Y-like protein 1 (ccnyl1), found in Xenopus tropicalis (Western clawed frog).